The following is a 203-amino-acid chain: Large ribosomal subunit protein bL25 (203 aa).

The segment at 1-21 is disordered; the sequence is MMENLQVNQREKKTRHSSRQC. The segment covering 12 to 21 has biased composition (basic residues); sequence KKTRHSSRQC.

The protein belongs to the bacterial ribosomal protein bL25 family. CTC subfamily. In terms of assembly, part of the 50S ribosomal subunit; part of the 5S rRNA/L5/L18/L25 subcomplex. Contacts the 5S rRNA. Binds to the 5S rRNA independently of L5 and L18.

In terms of biological role, this is one of the proteins that binds to the 5S RNA in the ribosome where it forms part of the central protuberance. The polypeptide is Large ribosomal subunit protein bL25 (Clostridium perfringens (strain 13 / Type A)).